Reading from the N-terminus, the 256-residue chain is Signal peptidase I (256 aa).

Active-site residues include Ser32 and Lys75.

This sequence belongs to the peptidase S26 family.

It carries out the reaction Cleavage of hydrophobic, N-terminal signal or leader sequences from secreted and periplasmic proteins.. This is Signal peptidase I (lepB) from Aquifex aeolicus (strain VF5).